A 97-amino-acid chain; its full sequence is Aspartyl/glutamyl-tRNA(Asn/Gln) amidotransferase subunit C (97 aa).

The protein belongs to the GatC family. Heterotrimer of A, B and C subunits.

It carries out the reaction L-glutamyl-tRNA(Gln) + L-glutamine + ATP + H2O = L-glutaminyl-tRNA(Gln) + L-glutamate + ADP + phosphate + H(+). It catalyses the reaction L-aspartyl-tRNA(Asn) + L-glutamine + ATP + H2O = L-asparaginyl-tRNA(Asn) + L-glutamate + ADP + phosphate + 2 H(+). Allows the formation of correctly charged Asn-tRNA(Asn) or Gln-tRNA(Gln) through the transamidation of misacylated Asp-tRNA(Asn) or Glu-tRNA(Gln) in organisms which lack either or both of asparaginyl-tRNA or glutaminyl-tRNA synthetases. The reaction takes place in the presence of glutamine and ATP through an activated phospho-Asp-tRNA(Asn) or phospho-Glu-tRNA(Gln). In Anaeromyxobacter dehalogenans (strain 2CP-C), this protein is Aspartyl/glutamyl-tRNA(Asn/Gln) amidotransferase subunit C.